The sequence spans 505 residues: Lysine--tRNA ligase (505 aa).

Positions 415 and 422 each coordinate Mg(2+).

Belongs to the class-II aminoacyl-tRNA synthetase family. In terms of assembly, homodimer. The cofactor is Mg(2+).

The protein localises to the cytoplasm. It carries out the reaction tRNA(Lys) + L-lysine + ATP = L-lysyl-tRNA(Lys) + AMP + diphosphate. The protein is Lysine--tRNA ligase of Serratia proteamaculans (strain 568).